A 345-amino-acid chain; its full sequence is Anthranilate phosphoribosyltransferase (345 aa).

Residues glycine 84, 87-88 (GD), threonine 92, 94-97 (NIST), 112-120 (KHGNRSVSS), and serine 124 contribute to the 5-phospho-alpha-D-ribose 1-diphosphate site. Glycine 84 is an anthranilate binding site. Serine 96 lines the Mg(2+) pocket. Asparagine 115 serves as a coordination point for anthranilate. Arginine 170 is an anthranilate binding site. Mg(2+) is bound by residues aspartate 229 and glutamate 230.

It belongs to the anthranilate phosphoribosyltransferase family. As to quaternary structure, homodimer. Mg(2+) is required as a cofactor.

The catalysed reaction is N-(5-phospho-beta-D-ribosyl)anthranilate + diphosphate = 5-phospho-alpha-D-ribose 1-diphosphate + anthranilate. It functions in the pathway amino-acid biosynthesis; L-tryptophan biosynthesis; L-tryptophan from chorismate: step 2/5. In terms of biological role, catalyzes the transfer of the phosphoribosyl group of 5-phosphorylribose-1-pyrophosphate (PRPP) to anthranilate to yield N-(5'-phosphoribosyl)-anthranilate (PRA). The polypeptide is Anthranilate phosphoribosyltransferase (Xanthomonas oryzae pv. oryzae (strain MAFF 311018)).